Reading from the N-terminus, the 213-residue chain is Protein-L-isoaspartate O-methyltransferase (213 aa).

Residue Ser-64 is part of the active site.

It belongs to the methyltransferase superfamily. L-isoaspartyl/D-aspartyl protein methyltransferase family.

Its subcellular location is the cytoplasm. The catalysed reaction is [protein]-L-isoaspartate + S-adenosyl-L-methionine = [protein]-L-isoaspartate alpha-methyl ester + S-adenosyl-L-homocysteine. In terms of biological role, catalyzes the methyl esterification of L-isoaspartyl residues in peptides and proteins that result from spontaneous decomposition of normal L-aspartyl and L-asparaginyl residues. It plays a role in the repair and/or degradation of damaged proteins. The chain is Protein-L-isoaspartate O-methyltransferase from Flavobacterium johnsoniae (strain ATCC 17061 / DSM 2064 / JCM 8514 / BCRC 14874 / CCUG 350202 / NBRC 14942 / NCIMB 11054 / UW101) (Cytophaga johnsonae).